The chain runs to 121 residues: Non-structural protein 8 (121 aa).

The first 15 residues, 1-15, serve as a signal peptide directing secretion; it reads MKLLIVFGLLTSVYC. Residues 19–121 enclose the SARS ORF8 Ig-like domain; the sequence is ECSIQECCEN…HDVRVVLDFV (103 aa). Cystine bridges form between cysteine 25/cysteine 90, cysteine 37/cysteine 102, and cysteine 61/cysteine 83.

In Bat coronavirus Rp3/2004 (BtCoV/Rp3/2004), this protein is Non-structural protein 8.